The primary structure comprises 460 residues: MDLVTRRVRGADAIAGPLLFLEGVPRARLGELVRIRMAGGEERRGQIIELSGARVAVQVLEETRGLAPARAEVTLTGEVATLAVSRGMLGRVLDGLGRPTDGLPAPIAEARLPIHGAALNVTRREKPADFIETGVSAIDGLNTLVRGQKLPVFSCAGLPAGRLAGQIVCQARVRGGERFAVVFAAMGAPFREYDAYLEAFRRAGVLDRTAVFLNRAEDPPIERLMTPRCALTCAEHLAFSHGLHVLVVLTDMTSYCEALREVALARDEVPGRRGYPGYMYTDLATIYERAGRIAGRPGSITQVPVLTMPDDDLTHPIPDLSGYITEGQIVLSRELDRRGVYPPIDVLPSLSRLMGLGAGPGRTRADHRPLADQLYALYARGRDVRRMAAIVGSANLGEEERRLLEFGDRFERELVGQGDAFRSIEDTLETGWRLLAQLPPEALARIPAAVLEARRKEGQR.

Belongs to the ATPase alpha/beta chains family.

Its function is as follows. Produces ATP from ADP in the presence of a proton gradient across the membrane. The V-type beta chain is a regulatory subunit. The protein is V-type ATP synthase beta chain of Anaeromyxobacter sp. (strain Fw109-5).